An 838-amino-acid chain; its full sequence is Urease (838 aa).

The 437-residue stretch at 402 to 838 folds into the Urease domain; the sequence is GGFDTHIHFI…LPLTQDYFVY (437 aa). Ni(2+) contacts are provided by H407, H409, and K490. Residue K490 is modified to N6-carboxylysine. H492 lines the substrate pocket. 2 residues coordinate Ni(2+): H519 and H545. H593 (proton donor) is an active-site residue. D633 contributes to the Ni(2+) binding site.

It in the C-terminal section; belongs to the metallo-dependent hydrolases superfamily. Urease alpha subunit family. Homohexamer. Ni cation serves as cofactor. Carboxylation allows a single lysine to coordinate two nickel ions.

It catalyses the reaction urea + 2 H2O + H(+) = hydrogencarbonate + 2 NH4(+). Its pathway is nitrogen metabolism; urea degradation; CO(2) and NH(3) from urea (urease route): step 1/1. This Aspergillus fumigatus (strain ATCC MYA-4609 / CBS 101355 / FGSC A1100 / Af293) (Neosartorya fumigata) protein is Urease (ure1).